The following is a 469-amino-acid chain: Argininosuccinate lyase (469 aa).

Belongs to the lyase 1 family. Argininosuccinate lyase subfamily.

The protein localises to the cytoplasm. It carries out the reaction 2-(N(omega)-L-arginino)succinate = fumarate + L-arginine. It participates in amino-acid biosynthesis; L-arginine biosynthesis; L-arginine from L-ornithine and carbamoyl phosphate: step 3/3. The polypeptide is Argininosuccinate lyase (Burkholderia cenocepacia (strain ATCC BAA-245 / DSM 16553 / LMG 16656 / NCTC 13227 / J2315 / CF5610) (Burkholderia cepacia (strain J2315))).